A 666-amino-acid polypeptide reads, in one-letter code: tRNA 5-methylaminomethyl-2-thiouridine biosynthesis bifunctional protein MnmC (666 aa).

The interval 1 to 253 is tRNA (mnm(5)s(2)U34)-methyltransferase; that stretch reads MSSPFAPIIT…KRHMLCAYYE (253 aa). The FAD-dependent cmnm(5)s(2)U34 oxidoreductase stretch occupies residues 283–666; sequence VGGGLAGCFI…FLRKKIIQGP (384 aa).

It in the N-terminal section; belongs to the methyltransferase superfamily. tRNA (mnm(5)s(2)U34)-methyltransferase family. The protein in the C-terminal section; belongs to the DAO family. The cofactor is FAD.

Its subcellular location is the cytoplasm. The catalysed reaction is 5-aminomethyl-2-thiouridine(34) in tRNA + S-adenosyl-L-methionine = 5-methylaminomethyl-2-thiouridine(34) in tRNA + S-adenosyl-L-homocysteine + H(+). In terms of biological role, catalyzes the last two steps in the biosynthesis of 5-methylaminomethyl-2-thiouridine (mnm(5)s(2)U) at the wobble position (U34) in tRNA. Catalyzes the FAD-dependent demodification of cmnm(5)s(2)U34 to nm(5)s(2)U34, followed by the transfer of a methyl group from S-adenosyl-L-methionine to nm(5)s(2)U34, to form mnm(5)s(2)U34. The sequence is that of tRNA 5-methylaminomethyl-2-thiouridine biosynthesis bifunctional protein MnmC from Legionella pneumophila (strain Corby).